A 1064-amino-acid chain; its full sequence is WD repeat-containing protein on Y chromosome (1064 aa).

8 WD repeats span residues 153 to 197 (EEVT…IRTA), 326 to 365 (RVPLGVSTFFVAESHNIVVTGGPDTFVRIWDVYIPTEPSA), 369 to 408 (GHNGGIVMVFVQPEENKVYSVDYQKIIKVWDLQEHTLLQT), 459 to 498 (THAAPVSVVLYNRLFRNIVTCGLDSYIIVWDPWSGRRKII), 511 to 550 (IIDIEITAATFDPLEQFLLTGARDGTLKIWNYNNAVVVRN), 598 to 638 (FHTD…RRYS), 746 to 785 (KTGDCVLTMCTDRKNRYIYTGTAFGYIKVWHIVNYPEAEK), and 827 to 866 (AHLKAINSIAFINLPKIVFRGSHDYSCRLWTQGGRYLGTL). The span at 914-924 (PAKRAEVKAPE) shows a compositional bias: basic and acidic residues. 2 disordered regions span residues 914–935 (PAKRAEVKAPEDRDEETAQTDD) and 1023–1064 (GSAL…QQSE). Positions 925 to 935 (DRDEETAQTDD) are enriched in acidic residues.

The protein is WD repeat-containing protein on Y chromosome of Drosophila pseudoobscura pseudoobscura (Fruit fly).